The following is a 214-amino-acid chain: Phosphatidyl-N-methylethanolamine N-methyltransferase (214 aa).

Residues 1–19 (MPLVALGVADLFNFVDYSK) lie on the Lumenal side of the membrane. An intramembrane region (helical) is located at residues 20–40 (TSLAISAAAIAFNPTFWNIVA). The Lumenal portion of the chain corresponds to 41-52 (RREYRTKFLTRA). The chain crosses the membrane as a helical span at residues 53–74 (FGGNAQVACYFLAVTIFGLGLV). The Cytoplasmic portion of the chain corresponds to 75 to 101 (RDFLYERALRDQPSHPLLEGTYVKYAA). Residues 102 to 122 (YALLALGNLLVITSTMRLGIT) form a helical membrane-spanning segment. Residue 106-108 (ALG) coordinates S-adenosyl-L-methionine. Residues 123-165 (GTFLGDYFGILMDGIVTGFPFNVTSAPMYYGSTMSFLGTALLY) are Lumenal-facing. The chain crosses the membrane as a helical span at residues 166 to 186 (GKPAGLLLTAWVLFVYIIAIQ). The Cytoplasmic segment spans residues 187–214 (FENPFTAEIYAKRDRERAKAAGTSKKEL). 188 to 189 (EN) contributes to the S-adenosyl-L-methionine binding site.

The protein belongs to the class VI-like SAM-binding methyltransferase superfamily. PEMT/PEM2 methyltransferase family.

It localises to the endoplasmic reticulum membrane. The protein resides in the mitochondrion membrane. The catalysed reaction is a 1,2-diacyl-sn-glycero-3-phospho-N-methylethanolamine + S-adenosyl-L-methionine = a 1,2-diacyl-sn-glycero-3-phospho-N,N-dimethylethanolamine + S-adenosyl-L-homocysteine + H(+). It carries out the reaction a 1,2-diacyl-sn-glycero-3-phospho-N,N-dimethylethanolamine + S-adenosyl-L-methionine = a 1,2-diacyl-sn-glycero-3-phosphocholine + S-adenosyl-L-homocysteine + H(+). The protein operates within phospholipid metabolism; phosphatidylcholine biosynthesis. Its function is as follows. Catalyzes the second two steps of the methylation pathway of phosphatidylcholine biosynthesis, the SAM-dependent methylation of phosphatidylmonomethylethanolamine (PMME) to phosphatidyldimethylethanolamine (PDME) and of PDME to phosphatidylcholine (PC). The protein is Phosphatidyl-N-methylethanolamine N-methyltransferase of Neurospora crassa (strain ATCC 24698 / 74-OR23-1A / CBS 708.71 / DSM 1257 / FGSC 987).